We begin with the raw amino-acid sequence, 90 residues long: uncharacterized protein (90 aa).

This is an uncharacterized protein from Mycoplasma genitalium (strain ATCC 33530 / DSM 19775 / NCTC 10195 / G37) (Mycoplasmoides genitalium).